The sequence spans 1962 residues: Sodium channel protein type 10 subunit alpha (1962 aa).

Residues 1–125 lie on the Cytoplasmic side of the membrane; the sequence is MEFPFGSLET…FNLIRRTAIK (125 aa). The tract at residues 32 to 56 is disordered; it reads QAAKKAKGKHREQKDQEEKPRPQLD. The segment covering 33–42 has biased composition (basic residues); it reads AAKKAKGKHR. Over residues 43–55 the composition is skewed to basic and acidic residues; sequence EQKDQEEKPRPQL. The stretch at 116–414 is one I repeat; it reads FNLIRRTAIK…VTMAYEEQNQ (299 aa). Residues 126–149 form a helical membrane-spanning segment; that stretch reads VSVHSWFSLFITVTILVNCVGMTQ. Over 150-154 the chain is Extracellular; the sequence is TELPD. Residues 155-174 form a helical membrane-spanning segment; it reads RIEYVFTVIYTFEALIKILA. The Cytoplasmic segment spans residues 175 to 187; that stretch reads RGFCLNEFAYLRD. A helical membrane pass occupies residues 188-206; sequence PWDWLDFSVITLAYIGEAT. Over 207 to 212 the chain is Extracellular; it reads ALRGIS. A helical; Voltage-sensor membrane pass occupies residues 213 to 232; sequence GLRTFRVLRALKTVSVIPGL. At 233 to 248 the chain is on the cytoplasmic side; the sequence is KVIVGALIHSVRKLAD. A helical membrane pass occupies residues 249–272; that stretch reads VTILTVFCLSVFALVGLQLFKGNL. The Extracellular portion of the chain corresponds to 273–350; sequence KNKCVKNCAA…PDFNYTSFDS (78 aa). A disulfide bridge links Cys-276 with Cys-328. 4 N-linked (GlcNAc...) asparagine glycosylation sites follow: Asn-284, Asn-288, Asn-321, and Asn-344. The segment at residues 351–375 is an intramembrane region (pore-forming); the sequence is FAWAFLSLFRLMTQDSWERLYQQTL. Topologically, residues 376–382 are extracellular; the sequence is RASGKMY. The chain crosses the membrane as a helical span at residues 383 to 408; it reads MVFFVLVIFLGSFYLVNLILAVVTMA. The Cytoplasmic segment spans residues 409–668; the sequence is YEEQNQATID…TWVKLKTVLF (260 aa). 4 positions are modified to phosphoserine: Ser-450, Ser-453, Ser-476, and Ser-488. A compositionally biased stretch (polar residues) spans 452-463; it reads HSCNGSPLPSKN. 2 disordered regions span residues 452 to 493 and 521 to 586; these read HSCN…PYNQ and LDTS…TGEL. Ser-621 and Ser-624 each carry phosphoserine. One copy of the II repeat lies at 656–920; that stretch reads CCPTWVKLKT…DEDGEVNNLQ (265 aa). A helical transmembrane segment spans residues 669 to 693; sequence GIVTDPFAELTTTLCIVVNTVFMAM. Over 694 to 704 the chain is Extracellular; that stretch reads EHHGMSSAFEA. The helical transmembrane segment at 705–728 threads the bilayer; the sequence is MLQIGNIVFTVFFTAEMVFKIIAF. Residues 729-736 are Cytoplasmic-facing; that stretch reads DPYYYFQK. A helical membrane pass occupies residues 737–756; sequence RWNIFDCIIVTVSLIELGAA. Topologically, residues 757 to 762 are extracellular; sequence RKGSLS. Residues 763–782 traverse the membrane as a helical; Voltage-sensor segment; that stretch reads VLRTFRLLRVFKLAKSWPTL. Over 783–798 the chain is Cytoplasmic; the sequence is NTLIKIIGNSVGALGN. A helical membrane pass occupies residues 799–819; that stretch reads LTIILAIIVFVFALVGKQLLG. Topologically, residues 820 to 843 are extracellular; the sequence is ENYRDNRRNISAPNEEWPRWHMHD. A glycan (N-linked (GlcNAc...) asparagine) is linked at Asn-828. The segment at residues 844–864 is an intramembrane region (pore-forming); sequence FFHSFLIVFRILCGEWIENMW. The Extracellular segment spans residues 865–873; it reads ACMEVGQKS. A disulfide bond links Cys-866 and Cys-875. A helical transmembrane segment spans residues 874–899; it reads ICLILFLTVMVLGNLVVLNLFTALLL. Residues 900–1154 are Cytoplasmic-facing; that stretch reads NSFSADNLAT…GWQVRKTCYR (255 aa). Residues 1015-1026 show a composition bias toward acidic residues; sequence LDDLEEDGEEDS. A disordered region spans residues 1015–1035; sequence LDDLEEDGEEDSQSSQQEVIL. Residues 1147-1456 form an III repeat; the sequence is QVRKTCYRIV…KKYYNAMKKL (310 aa). Residues 1155 to 1178 traverse the membrane as a helical segment; sequence IVEHSWFESFIIFMILLSSGSLAF. Over 1179-1191 the chain is Extracellular; sequence EDYHLDQKPTVKA. The chain crosses the membrane as a helical span at residues 1192–1217; that stretch reads LLEYTDRMFTFIFVLEMLLKWVAYGF. Residues 1218-1223 lie on the Cytoplasmic side of the membrane; sequence KKYFTN. A helical membrane pass occupies residues 1224–1245; that stretch reads AWCWLDFLIVNISLISLIAKIL. The Extracellular portion of the chain corresponds to 1246 to 1249; sequence QYSD. A helical; Voltage-sensor transmembrane segment spans residues 1250 to 1271; it reads VASIKALRTLRALRPLRALSRF. The Cytoplasmic segment spans residues 1272–1290; sequence EGMRVVVDALVGAIPSIMN. Residues 1291 to 1318 traverse the membrane as a helical segment; the sequence is VLLVCLIFWLIFSTMGVNFFAGKFGRCI. N-linked (GlcNAc...) asparagine glycans are attached at residues Asn-1319, Asn-1335, and Asn-1343. Residues 1319–1360 lie on the Extracellular side of the membrane; it reads NKTNEYFSLVPLSIVNNISDCKYQNHTGSFFWVNVKVNFDNV. The segment at residues 1361–1382 is an intramembrane region (pore-forming); it reads AMGYLALLQVATFKGWMDIMYA. The Extracellular segment spans residues 1383-1398; sequence AVDARDVNLQPKWEDN. The helical transmembrane segment at 1399 to 1425 threads the bilayer; the sequence is VYMYLYFVIFIIFGGFFTLNLFVGVII. Topologically, residues 1426-1478 are cytoplasmic; sequence DNFNQQKKKLGGQDIFMTEEQKKYYNAMKKLGSKKPQKPIPRPLNKYQGFVFD. At Ser-1458 the chain carries Phosphoserine; by PKC. The IV repeat unit spans residues 1465–1764; that stretch reads IPRPLNKYQG…WEKFDPEATQ (300 aa). Residues 1479–1502 traverse the membrane as a helical segment; it reads IVTKQAFDIVIMVLICLNMITMMV. The Extracellular segment spans residues 1503-1513; that stretch reads ETDEQSAEKTK. A helical transmembrane segment spans residues 1514–1537; sequence ILNKINQFFVAVFTGECVMKMFAL. Over 1538–1543 the chain is Cytoplasmic; sequence RHYYFT. Residues 1544–1567 form a helical membrane-spanning segment; sequence NGWNVFDFIVVVLSIGSLVFSVIL. Over 1568-1579 the chain is Extracellular; it reads TSLENYFSPTLF. The chain crosses the membrane as a helical; Voltage-sensor span at residues 1580–1601; the sequence is RVIRLARIGRILRLIRAAKGIR. Residues 1602–1616 are Cytoplasmic-facing; the sequence is TLLFALMMSLPALFN. The helical transmembrane segment at 1617-1639 threads the bilayer; it reads IGLLLFLVMFIYSIFGMASFPHV. Topologically, residues 1640–1653 are extracellular; that stretch reads SWEAGIDDMFNFQT. An intramembrane region (pore-forming) is located at residues 1654 to 1676; it reads FANSMLCLFQITTSAGWDGLLSP. At 1677 to 1704 the chain is on the extracellular side; it reads ILNTGPPYCDPNLPNSNGSRGNCGSPAV. Asn-1693 carries an N-linked (GlcNAc...) asparagine glycan. Residues 1705-1729 traverse the membrane as a helical segment; it reads GILFFTTYIIISFLIVVNMYIAVIL. Over 1730–1962 the chain is Cytoplasmic; that stretch reads ENFNVATQES…TSKKVTAPGP (233 aa). The IQ domain maps to 1858–1887; that stretch reads EDISATVIQKAYRSYVLHRSMTISNPPAVP. Positions 1914–1962 are disordered; that stretch reads KSETASAASFPPSYDSVTRGLSDQINMSTSSSMQNEDEGTSKKVTAPGP. Residues 1928-1947 show a composition bias toward polar residues; the sequence is DSVTRGLSDQINMSTSSSMQ.

Belongs to the sodium channel (TC 1.A.1.10) family. Nav1.8/SCN10A subfamily. As to quaternary structure, the channel consists of an ion conducting pore forming alpha-subunit regulated by one or more associated auxiliary subunits SCN1B, SCN2B and SCN3B; electrophysiological properties may vary depending on the type of the associated beta subunits. Found in a number of complexes with PRX, DYNLT1 and PDZD2. Interacts with proteins such as FSTL1, PRX, DYNLT1, PDZD2, S100A10 and many others. Interacts with NEDD4 and NEDD4L. Post-translationally, ubiquitinated by NEDD4L; which promotes its endocytosis. Phosphorylation at Ser-1458 by PKC in a highly conserved cytoplasmic loop slows inactivation of the sodium channel and reduces peak sodium currents. In terms of processing, lacks the cysteine which covalently binds the conotoxin GVIIJ. This cysteine (position 825) is speculated in other sodium channel subunits alpha to be implied in covalent binding with the sodium channel subunit beta-2 or beta-4. As to expression, expressed in nodose ganglia, but not in cortex, hippocampus, cerebellum, liver, heart and skeletal muscle.

It localises to the cell membrane. The catalysed reaction is Na(+)(in) = Na(+)(out). In terms of biological role, tetrodotoxin-resistant channel that mediates the voltage-dependent sodium ion permeability of excitable membranes. Assuming opened or closed conformations in response to the voltage difference across the membrane, the protein forms a sodium-selective channel through which sodium ions may pass in accordance with their electrochemical gradient. Plays a role in neuropathic pain mechanisms. This is Sodium channel protein type 10 subunit alpha (SCN10A) from Canis lupus familiaris (Dog).